We begin with the raw amino-acid sequence, 220 residues long: Large ribosomal subunit protein uL3 (220 aa).

Residues 130–156 are disordered; sequence AIKRHGQSRGPMSHGSHFHRAPGSVGM.

It belongs to the universal ribosomal protein uL3 family. In terms of assembly, part of the 50S ribosomal subunit. Forms a cluster with proteins L14 and L19.

In terms of biological role, one of the primary rRNA binding proteins, it binds directly near the 3'-end of the 23S rRNA, where it nucleates assembly of the 50S subunit. This is Large ribosomal subunit protein uL3 from Staphylococcus aureus (strain Mu3 / ATCC 700698).